The sequence spans 2151 residues: Protein PRR14L (2151 aa).

Composition is skewed to basic and acidic residues over residues lysine 112–arginine 123 and glutamate 134–threonine 154. 3 disordered regions span residues lysine 112–aspartate 160, glycine 206–serine 225, and glutamine 314–serine 350. Serine 157 bears the Phosphoserine mark. Residues glutamine 322 to serine 350 show a composition bias toward polar residues. Serine 582 and serine 945 each carry phosphoserine. The segment at serine 974–valine 1017 is disordered. Positions aspartate 996–lysine 1013 are enriched in basic and acidic residues. Serine 1029 carries the post-translational modification Phosphoserine. Residues aspartate 1091–alanine 1103 show a composition bias toward basic and acidic residues. Disordered stretches follow at residues aspartate 1091 to phenylalanine 1115, aspartate 1178 to aspartate 1226, threonine 1782 to aspartate 1802, and alanine 1986 to glutamine 2012. The span at aspartate 1178 to glycine 1187 shows a compositional bias: polar residues. The span at threonine 1188–arginine 1201 shows a compositional bias: basic and acidic residues.

The sequence is that of Protein PRR14L (PRR14L) from Homo sapiens (Human).